The following is a 56-amino-acid chain: Large ribosomal subunit protein uL30 (56 aa).

This sequence belongs to the universal ribosomal protein uL30 family. Part of the 50S ribosomal subunit.

The chain is Large ribosomal subunit protein uL30 from Nitratidesulfovibrio vulgaris (strain DSM 19637 / Miyazaki F) (Desulfovibrio vulgaris).